Consider the following 150-residue polypeptide: Phosphopantetheine adenylyltransferase (150 aa).

Residue serine 10 coordinates substrate. ATP contacts are provided by residues 10-11 and histidine 18; that span reads SF. Substrate is bound by residues lysine 42, threonine 74, and arginine 88. Residues 89-91, glutamate 99, and 124-130 each bind ATP; these read GLR and LAYISSS.

Belongs to the bacterial CoaD family. As to quaternary structure, homohexamer. It depends on Mg(2+) as a cofactor.

Its subcellular location is the cytoplasm. It catalyses the reaction (R)-4'-phosphopantetheine + ATP + H(+) = 3'-dephospho-CoA + diphosphate. Its pathway is cofactor biosynthesis; coenzyme A biosynthesis; CoA from (R)-pantothenate: step 4/5. Its function is as follows. Reversibly transfers an adenylyl group from ATP to 4'-phosphopantetheine, yielding dephospho-CoA (dPCoA) and pyrophosphate. The polypeptide is Phosphopantetheine adenylyltransferase (Cytophaga hutchinsonii (strain ATCC 33406 / DSM 1761 / CIP 103989 / NBRC 15051 / NCIMB 9469 / D465)).